Here is a 241-residue protein sequence, read N- to C-terminus: MSRHPEVKWAETTEKIFLTVVLADTKDTKVNLDPEGVFDFSAKVGPENHVYELKLELADKVNVEESKINIGERSIFCIIEKAEPERWNKLLRVKKPPHYVKVDWDKWVDEDDEGSAGAADMDMAGMEGMGGMGGMGGMGGMGGMGGMGGMGGMEGMDFSKLMGGMGGMGGMGGLEGLGGMGGMGGMGGMGGMGGMEEFEDSDDEEETAKSGDKKDDAVKEEGLATEKAPAAEETTSVKEDK.

Residues 2–91 enclose the CS domain; that stretch reads SRHPEVKWAE…AEPERWNKLL (90 aa). 17 MGG repeats span residues 129-131, 132-134, 135-137, 138-140, 141-143, 144-146, 147-149, 150-152, 162-164, 165-167, 168-170, 171-173, 180-182, 183-185, 186-188, 189-191, and 192-194; these read MGG. Residues 129–194 are 17 X 3 AA repeats of M-G-G; that stretch reads MGGMGGMGGM…GMGGMGGMGG (66 aa). The tract at residues 188 to 241 is disordered; sequence GMGGMGGMEEFEDSDDEEETAKSGDKKDDAVKEEGLATEKAPAAEETTSVKEDK. The segment covering 196–206 has biased composition (acidic residues); it reads EEFEDSDDEEE. Positions 207–224 are enriched in basic and acidic residues; it reads TAKSGDKKDDAVKEEGLA. Residues 225-234 show a composition bias toward low complexity; it reads TEKAPAAEET.

The protein belongs to the p23/wos2 family. As to quaternary structure, interacts with HSP90 in an ATP-dependent manner. Interacts with HSP90-5, HSP90-6 and HSP90-7. As to expression, widely expressed but preferentially in the root meristem.

It localises to the cytoplasm. Its subcellular location is the nucleus. Its function is as follows. Acts as a co-chaperone for HSP90. Controls root development through the modulation of auxin distribution in the root meristem. The polypeptide is Co-chaperone protein p23-1 (Arabidopsis thaliana (Mouse-ear cress)).